Reading from the N-terminus, the 663-residue chain is Telomere length regulator taz1 (663 aa).

Residues 15–72 (ENEGDQQFDKEVVQNSDSNIETGQISDSLTKAVEERAETESSSNLSNFTTSESESSKP) form a disordered region. Polar residues-rich tracts occupy residues 27 to 43 (VQNS…SDSL) and 54 to 67 (ESSS…TSES). Serine 332 is subject to Phosphoserine. 2 disordered regions span residues 389–412 (GSTA…TFSE) and 471–554 (RAKS…PYEG). Basic and acidic residues-rich tracts occupy residues 489–498 (KRGDNLRREA) and 512–524 (PPVR…ESRS). Residues 556–612 (RTRRKWTDEEENELYEMISQHGCCWSKIIHIQKLENGPLKTFGPTQIKDKARLIKAR) form the Myb-like domain.

As to quaternary structure, interacts with taf1 via the Myb domain, and ccq1.

Its subcellular location is the cytoplasm. The protein resides in the nucleus. It localises to the chromosome. It is found in the telomere. In terms of biological role, regulates telomere length and function. Required for the repression of telomere-adjacent gene expression and for normal meiosis or sporulation. It may be a negative regulator of the telomere-replicating enzyme, telomerase, or may protect against activation of telomerase-independent pathways of telomere elongation. It may be involved in the interactions between chromosomes and spindle proteins, disruption of these interactions would lead to defective meiosis. This Schizosaccharomyces pombe (strain 972 / ATCC 24843) (Fission yeast) protein is Telomere length regulator taz1 (taz1).